The primary structure comprises 89 residues: Small ribosomal subunit protein uS15 (89 aa).

Belongs to the universal ribosomal protein uS15 family. As to quaternary structure, part of the 30S ribosomal subunit. Forms a bridge to the 50S subunit in the 70S ribosome, contacting the 23S rRNA.

Functionally, one of the primary rRNA binding proteins, it binds directly to 16S rRNA where it helps nucleate assembly of the platform of the 30S subunit by binding and bridging several RNA helices of the 16S rRNA. Its function is as follows. Forms an intersubunit bridge (bridge B4) with the 23S rRNA of the 50S subunit in the ribosome. The protein is Small ribosomal subunit protein uS15 of Leuconostoc mesenteroides subsp. mesenteroides (strain ATCC 8293 / DSM 20343 / BCRC 11652 / CCM 1803 / JCM 6124 / NCDO 523 / NBRC 100496 / NCIMB 8023 / NCTC 12954 / NRRL B-1118 / 37Y).